The sequence spans 437 residues: O-methyltransferase 10 (437 aa).

4 residues coordinate S-adenosyl-L-methionine: G259, E282, N315, and M316. H335 serves as the catalytic Proton acceptor.

Belongs to the class I-like SAM-binding methyltransferase superfamily. Cation-independent O-methyltransferase family. COMT subfamily.

The catalysed reaction is (3,5-dichloro-2,4,6-trihydroxyphenyl)hexan-1-one + S-adenosyl-L-methionine = 1-(3,5-dichloro-2,6-dihydroxy-4-methoxyphenyl)hexan-1-one + S-adenosyl-L-homocysteine + H(+). The chain is O-methyltransferase 10 (omt10) from Dictyostelium discoideum (Social amoeba).